A 404-amino-acid polypeptide reads, in one-letter code: Phosphoglycerate kinase (404 aa).

Substrate is bound by residues aspartate 21–asparagine 23, arginine 38, histidine 61–arginine 64, arginine 126, and arginine 159. Residues lysine 210, glutamate 333, and glycine 360–serine 363 each bind ATP.

This sequence belongs to the phosphoglycerate kinase family. In terms of assembly, monomer.

The protein resides in the cytoplasm. The enzyme catalyses (2R)-3-phosphoglycerate + ATP = (2R)-3-phospho-glyceroyl phosphate + ADP. It functions in the pathway carbohydrate degradation; glycolysis; pyruvate from D-glyceraldehyde 3-phosphate: step 2/5. The sequence is that of Phosphoglycerate kinase from Acidobacterium capsulatum (strain ATCC 51196 / DSM 11244 / BCRC 80197 / JCM 7670 / NBRC 15755 / NCIMB 13165 / 161).